The primary structure comprises 54 residues: Ovomucoid (54 aa).

The Kazal-like domain maps to 4-54; that stretch reads VDCSDYPKPACTVEYMPLCGSDNKTYGNKCNFCNAVVDSNGTLTLSHFGKC. 3 disulfides stabilise this stretch: cysteine 6–cysteine 36, cysteine 14–cysteine 33, and cysteine 22–cysteine 54. N-linked (GlcNAc...) asparagine glycosylation is present at asparagine 43.

Its subcellular location is the secreted. The sequence is that of Ovomucoid from Anser canagicus (Emperor goose).